Reading from the N-terminus, the 317-residue chain is MSQEFLDFELPIAELEAKIEALRSVSQQDQQINLDDEITRLQKKSAELTQKTFANLDAWQVSQMARHPNRPYTLDYIEHIFTDFQTLAGDRAFADDQAIVGGLARLEERPVMIIGHQKGRSIKEKVKRNFGMPAPEGYRKALRLMQMAERFNLPIITFIDTPGAYPGVGAEERGQSEAIARNLREMSMLKVPIICTVIGEGGSGGALAIGVGDKINMLQYSTYSVISPEGCASILWKSAAKASTAAEVMGLTASRLHELKLIDSIIEEPLGGAHRNYDTMSNNLKKRLLADLADLDKLDQETLLDRRYKRLMSYGYC.

The 262-residue stretch at 33–294 (NLDDEITRLQ…KKRLLADLAD (262 aa)) folds into the CoA carboxyltransferase C-terminal domain.

This sequence belongs to the AccA family. In terms of assembly, acetyl-CoA carboxylase is a heterohexamer composed of biotin carboxyl carrier protein (AccB), biotin carboxylase (AccC) and two subunits each of ACCase subunit alpha (AccA) and ACCase subunit beta (AccD).

Its subcellular location is the cytoplasm. The catalysed reaction is N(6)-carboxybiotinyl-L-lysyl-[protein] + acetyl-CoA = N(6)-biotinyl-L-lysyl-[protein] + malonyl-CoA. It functions in the pathway lipid metabolism; malonyl-CoA biosynthesis; malonyl-CoA from acetyl-CoA: step 1/1. Functionally, component of the acetyl coenzyme A carboxylase (ACC) complex. First, biotin carboxylase catalyzes the carboxylation of biotin on its carrier protein (BCCP) and then the CO(2) group is transferred by the carboxyltransferase to acetyl-CoA to form malonyl-CoA. The polypeptide is Acetyl-coenzyme A carboxylase carboxyl transferase subunit alpha (Histophilus somni (strain 2336) (Haemophilus somnus)).